The following is a 281-amino-acid chain: NADH--cytochrome b5 reductase 1 (281 aa).

Residues Ile13 to Thr33 form a helical membrane-spanning segment. Positions Ser34–Val40 match the AKR2A-binding sequence (ABS) required for mitochondrion outer membrane targeting motif. Positions Glu45–Gln149 constitute an FAD-binding FR-type domain. FAD-binding positions include Arg129 to Gly144 and Ala155 to Leu187. A Phosphothreonine modification is found at Thr166.

The protein belongs to the flavoprotein pyridine nucleotide cytochrome reductase family. As to quaternary structure, monomer. Interacts with AKR2A. FAD is required as a cofactor. As to expression, expressed in roots, stems, flowers and siliques. Detected in leaves.

The protein resides in the mitochondrion outer membrane. It catalyses the reaction 2 Fe(III)-[cytochrome b5] + NADH = 2 Fe(II)-[cytochrome b5] + NAD(+) + H(+). Reductase transferring electrons from NADH to cytochrome b5. Required for the NADH-dependent electron transfer involved in the desaturation and hydroxylation of fatty acids and in the desaturation of sterol precursors. No activity with NADPH as electron donor. This Arabidopsis thaliana (Mouse-ear cress) protein is NADH--cytochrome b5 reductase 1.